The chain runs to 130 residues: Small ribosomal subunit protein uS8 (130 aa).

The protein belongs to the universal ribosomal protein uS8 family. In terms of assembly, part of the 30S ribosomal subunit.

In terms of biological role, one of the primary rRNA binding proteins, it binds directly to 16S rRNA central domain where it helps coordinate assembly of the platform of the 30S subunit. This Halobacterium salinarum (strain ATCC 29341 / DSM 671 / R1) protein is Small ribosomal subunit protein uS8.